Reading from the N-terminus, the 199-residue chain is Pyridoxine/pyridoxamine 5'-phosphate oxidase (199 aa).

FMN contacts are provided by residues 45 to 50, 60 to 61, Arg-66, Lys-67, and Gln-89; these read RVVLLK and FT. Lys-50 serves as a coordination point for substrate. 3 residues coordinate substrate: Tyr-107, Arg-111, and Ser-115. FMN-binding positions include 124 to 125 and Trp-169; that span reads QS. A substrate-binding site is contributed by 175–177; it reads RIH. Arg-179 contacts FMN.

This sequence belongs to the pyridoxamine 5'-phosphate oxidase family. Homodimer. Requires FMN as cofactor.

The enzyme catalyses pyridoxamine 5'-phosphate + O2 + H2O = pyridoxal 5'-phosphate + H2O2 + NH4(+). The catalysed reaction is pyridoxine 5'-phosphate + O2 = pyridoxal 5'-phosphate + H2O2. Its pathway is cofactor metabolism; pyridoxal 5'-phosphate salvage; pyridoxal 5'-phosphate from pyridoxamine 5'-phosphate: step 1/1. It participates in cofactor metabolism; pyridoxal 5'-phosphate salvage; pyridoxal 5'-phosphate from pyridoxine 5'-phosphate: step 1/1. In terms of biological role, catalyzes the oxidation of either pyridoxine 5'-phosphate (PNP) or pyridoxamine 5'-phosphate (PMP) into pyridoxal 5'-phosphate (PLP). The chain is Pyridoxine/pyridoxamine 5'-phosphate oxidase from Ehrlichia chaffeensis (strain ATCC CRL-10679 / Arkansas).